A 167-amino-acid polypeptide reads, in one-letter code: 3-isopropylmalate dehydratase small subunit (167 aa).

Belongs to the LeuD family. LeuD type 2 subfamily. Heterodimer of LeuC and LeuD.

It catalyses the reaction (2R,3S)-3-isopropylmalate = (2S)-2-isopropylmalate. It participates in amino-acid biosynthesis; L-leucine biosynthesis; L-leucine from 3-methyl-2-oxobutanoate: step 2/4. Functionally, catalyzes the isomerization between 2-isopropylmalate and 3-isopropylmalate, via the formation of 2-isopropylmaleate. The polypeptide is 3-isopropylmalate dehydratase small subunit (Oleidesulfovibrio alaskensis (strain ATCC BAA-1058 / DSM 17464 / G20) (Desulfovibrio alaskensis)).